Consider the following 165-residue polypeptide: UPF0763 protein NIS_0363 (165 aa).

It belongs to the UPF0763 family.

This chain is UPF0763 protein NIS_0363, found in Nitratiruptor sp. (strain SB155-2).